A 326-amino-acid chain; its full sequence is Probable pectate lyase B (326 aa).

The signal sequence occupies residues 1–15 (MRVTAILTLATIAIA). Positions 133, 162, and 166 each coordinate Ca(2+). Arginine 219 is an active-site residue.

The protein belongs to the polysaccharide lyase 1 family. It depends on Ca(2+) as a cofactor.

Its subcellular location is the secreted. The enzyme catalyses Eliminative cleavage of (1-&gt;4)-alpha-D-galacturonan to give oligosaccharides with 4-deoxy-alpha-D-galact-4-enuronosyl groups at their non-reducing ends.. Pectinolytic enzyme consist of four classes of enzymes: pectin lyase, polygalacturonase, pectin methylesterase and rhamnogalacturonase. Among pectinolytic enzymes, pectin lyase is the most important in depolymerization of pectin, since it cleaves internal glycosidic bonds of highly methylated pectins. Favors pectate, the anion, over pectin, the methyl ester. The polypeptide is Probable pectate lyase B (plyB) (Aspergillus flavus (strain ATCC 200026 / FGSC A1120 / IAM 13836 / NRRL 3357 / JCM 12722 / SRRC 167)).